A 175-amino-acid polypeptide reads, in one-letter code: Receptor activity-modifying protein 2 (175 aa).

The signal sequence occupies residues 1–42 (MASLRVERAGGPRLPRTRVGRPAALRLLLLLGAVLNPHEALA). Topologically, residues 43–143 (QPLPTTGTPG…VQPTFSDPPE (101 aa)) are extracellular. Cystine bridges form between cysteine 68-cysteine 99 and cysteine 84-cysteine 131. Asparagine 130 carries an N-linked (GlcNAc...) asparagine glycan. A helical transmembrane segment spans residues 144 to 165 (DVLLAMIIAPICLIPFLITLVV). The Cytoplasmic segment spans residues 166-175 (WRSKDSEAQA).

The protein belongs to the RAMP family. In terms of assembly, heterodimer of CALCRL and RAMP2; the interaction forms the receptor complex for adrenomedullin/ADM. Heterodimer of CALCR and RAMP2; interaction forms the AMYR2 receptor complex for calcitonin/CALC and amylin/IAPP. Strongly expressed in lung, breast, immune system and fetal tissues.

The protein resides in the cell membrane. Accessory protein that interacts with and modulates the function of G-protein coupled receptors including calcitonin gene-related peptide type 1 receptor (CALCRL) and calcitonin receptor (CALCR). Required for the transport of CALCRL to the plasma membrane. Together with CALCRL, form a receptor complex for adrenomedullin/ADM. Together with CALCR, act as a receptor complex for calcitonin/CT/CALC. Together with CALCR, also act as a receptor complex for amylin/IAPP. This chain is Receptor activity-modifying protein 2, found in Homo sapiens (Human).